The chain runs to 220 residues: Aspartic protease inhibitor 2 (220 aa).

Residues 1–23 (MMKCLFLLCLCLLPIVVFSSTFT) form the signal peptide. Residues 24–32 (SQNLIDLPS) constitute a propeptide that is removed on maturation. The Vacuolar targeting signal motif lies at 26-31 (NLIDLP). N51 carries N-linked (GlcNAc...) asparagine glycosylation. 2 cysteine pairs are disulfide-bonded: C80/C125 and C174/C185.

The protein belongs to the protease inhibitor I3 (leguminous Kunitz-type inhibitor) family. Tubers.

The protein localises to the vacuole. Inhibitor of cathepsin D (aspartic protease). May also inhibit trypsin and chymotrypsin (serine proteases). Protects the plant by inhibiting proteases of invading organisms. In Solanum tuberosum (Potato), this protein is Aspartic protease inhibitor 2.